Reading from the N-terminus, the 603-residue chain is Elongation factor 4 (603 aa).

The tr-type G domain maps to 7–189 (SRIRNFSIIA…SIVQLVPPPQ (183 aa)). GTP is bound by residues 19 to 24 (DHGKST) and 136 to 139 (NKID).

Belongs to the TRAFAC class translation factor GTPase superfamily. Classic translation factor GTPase family. LepA subfamily.

The protein resides in the cell inner membrane. It carries out the reaction GTP + H2O = GDP + phosphate + H(+). Functionally, required for accurate and efficient protein synthesis under certain stress conditions. May act as a fidelity factor of the translation reaction, by catalyzing a one-codon backward translocation of tRNAs on improperly translocated ribosomes. Back-translocation proceeds from a post-translocation (POST) complex to a pre-translocation (PRE) complex, thus giving elongation factor G a second chance to translocate the tRNAs correctly. Binds to ribosomes in a GTP-dependent manner. In Microcystis aeruginosa (strain NIES-843 / IAM M-2473), this protein is Elongation factor 4.